Consider the following 785-residue polypeptide: Probable ATP-dependent RNA helicase ddx17 (785 aa).

Composition is skewed to low complexity over residues 1 to 11 (MSYNSSNSGSG), 18 to 37 (SGNS…GNRS), 49 to 95 (SYNR…YGPS), and 105 to 177 (GSSS…NGYS). Positions 1–233 (MSYNSSNSGS…TPSTSYNGGS (233 aa)) are disordered. Residues 178 to 191 (KPTSNYSYSNGYTG) are compositionally biased toward polar residues. Positions 192 to 233 (PTTNYSSYSNGYSTPPTSTSTSSSSTTTTTTTTPSTSYNGGS) are enriched in low complexity. Positions 384 to 412 (MQFTQAPFPGYLMKEIIGAGFPNPTPIQS) match the Q motif motif. Residues 415 to 590 (WPIALKGRDI…HDFLTDHIQV (176 aa)) form the Helicase ATP-binding domain. Residue 428–435 (AKTGSGKT) participates in ATP binding. A DEAD box motif is present at residues 538–541 (DEAD). Positions 602 to 763 (NVRQIVEVCQ…KIPIELSNLS (162 aa)) constitute a Helicase C-terminal domain. Residues 764-774 (VTPSTSSNTKK) are compositionally biased toward polar residues. Residues 764 to 785 (VTPSTSSNTKKFSPYPTYSKRY) are disordered.

It belongs to the DEAD box helicase family. DDX5/DBP2 subfamily.

The protein resides in the cytoplasm. The protein localises to the nucleus. It carries out the reaction ATP + H2O = ADP + phosphate + H(+). Functionally, probable ATP-dependent RNA helicase which may be involved nonsense-mediated mRNA decay and ribosome biogenesis through rRNA processing. The sequence is that of Probable ATP-dependent RNA helicase ddx17 (ddx17) from Dictyostelium discoideum (Social amoeba).